We begin with the raw amino-acid sequence, 108 residues long: Putative bolA-like protein K11H12.1 (108 aa).

Residues 89–108 (SKWDGQKQEDSPTCRGGFGK) form a disordered region.

The protein belongs to the BolA/IbaG family.

This is Putative bolA-like protein K11H12.1 from Caenorhabditis elegans.